The following is a 555-amino-acid chain: Hdr-like menaquinol oxidoreductase iron-sulfur subunit 2 (555 aa).

4Fe-4S ferredoxin-type domains follow at residues 82-111 (RSFK…GDPK) and 151-180 (KELY…AEIV). C91, C94, C97, C101, C160, C163, C166, and C170 together coordinate [4Fe-4S] cluster.

As to quaternary structure, consists of five subunits: an integral membrane subunit, a cytochrome b-like subunit, a cytochrome c subunit and two iron-sulfur subunits. Requires [4Fe-4S] cluster as cofactor.

The protein resides in the cell membrane. Has menaquinol-oxidizing activity. HmeC and HmeD subunits may together mediate electron transfer from menaquinol to an unidentified electron acceptor on the cytoplasmic side of the membrane. In Archaeoglobus fulgidus (strain ATCC 49558 / DSM 4304 / JCM 9628 / NBRC 100126 / VC-16), this protein is Hdr-like menaquinol oxidoreductase iron-sulfur subunit 2 (hmeD).